The sequence spans 191 residues: Large ribosomal subunit protein uL6A (191 aa).

The protein belongs to the universal ribosomal protein uL6 family. In terms of assembly, component of the large ribosomal subunit (LSU). Mature yeast ribosomes consist of a small (40S) and a large (60S) subunit. The 40S small subunit contains 1 molecule of ribosomal RNA (18S rRNA) and 33 different proteins (encoded by 57 genes). The large 60S subunit contains 3 rRNA molecules (25S, 5.8S and 5S rRNA) and 46 different proteins (encoded by 81 genes). uL6 lines the binding pocket for eukaryotic elongation factor 2 (eEF2).

It localises to the cytoplasm. Its function is as follows. Component of the ribosome, a large ribonucleoprotein complex responsible for the synthesis of proteins in the cell. The small ribosomal subunit (SSU) binds messenger RNAs (mRNAs) and translates the encoded message by selecting cognate aminoacyl-transfer RNA (tRNA) molecules. The large subunit (LSU) contains the ribosomal catalytic site termed the peptidyl transferase center (PTC), which catalyzes the formation of peptide bonds, thereby polymerizing the amino acids delivered by tRNAs into a polypeptide chain. The nascent polypeptides leave the ribosome through a tunnel in the LSU and interact with protein factors that function in enzymatic processing, targeting, and the membrane insertion of nascent chains at the exit of the ribosomal tunnel. The chain is Large ribosomal subunit protein uL6A from Saccharomyces cerevisiae (strain ATCC 204508 / S288c) (Baker's yeast).